Consider the following 832-residue polypeptide: Receptor-interacting serine/threonine-protein kinase 4 (832 aa).

Residues 22-286 (FTGWEKVGSG…QGNGLNGELI (265 aa)) form the Protein kinase domain. Residues 28 to 36 (VGSGGFGQV) and Lys51 contribute to the ATP site. Lys51 participates in a covalent cross-link: Glycyl lysine isopeptide (Lys-Gly) (interchain with G-Cter in ubiquitin). The active-site Proton acceptor is the Asp143. Lys145 is covalently cross-linked (Glycyl lysine isopeptide (Lys-Gly) (interchain with G-Cter in ubiquitin)). Disordered stretches follow at residues 325-368 (QEIT…RLKR) and 389-424 (SGVS…GVSS). Over residues 329–342 (SETEDLCEKPDDEV) the composition is skewed to acidic residues. Positions 343–359 (KETAHDLDVKSPPEPRS) are enriched in basic and acidic residues. The segment covering 403–424 (RSSSESKLPSSGSGKRLSGVSS) has biased composition (low complexity). 10 ANK repeats span residues 485-514 (SGAS…NPNL), 518-547 (RGST…SVNA), 551-580 (DQWT…SVNE), 584-613 (EGRT…DVSL), 617-647 (DAWL…SVNA), 651-680 (DGRT…DVNV), 684-713 (LAQT…GKEA), 717-746 (DGYT…DVLA), 750-780 (LNQT…DLFD), and 782-811 (QGLS…HINL).

Belongs to the protein kinase superfamily. TKL Ser/Thr protein kinase family. As to quaternary structure, interacts with PRKCB. Interacts with TRAF1, TRAF2, TRAF3 and TRAF5. Interacts with BIRC2/c-IAP1, BIRC3/c-IAP2 and XIAP/BIRC4. Post-translationally, may be phosphorylated by MAP3K2 and MAP3K3. Proteolytically cleaved by during Fas-induced apoptosis. Cleavage at Asp-388 and Asp-426. In terms of processing, polyubiquitinated with 'Lys-48' and 'Lys-63'-linked chains by BIRC2/c-IAP1 and BIRC3/c-IAP2, leading to activation of NF-kappa-B. In terms of tissue distribution, expressed in hair follicles and skin.

It localises to the cytoplasm. It is found in the membrane. The catalysed reaction is L-seryl-[protein] + ATP = O-phospho-L-seryl-[protein] + ADP + H(+). It catalyses the reaction L-threonyl-[protein] + ATP = O-phospho-L-threonyl-[protein] + ADP + H(+). In terms of biological role, serine/threonine protein kinase. Required for embryonic skin development and correct skin homeostasis in adults, via phosphorylation of PKP1 and subsequent promotion of keratinocyte differentiation and cell adhesion. It is a direct transcriptional target of TP63. Plays a role in NF-kappa-B activation. This chain is Receptor-interacting serine/threonine-protein kinase 4 (RIPK4), found in Homo sapiens (Human).